We begin with the raw amino-acid sequence, 58 residues long: UPF0391 membrane protein Sbal_1421 (58 aa).

2 consecutive transmembrane segments (helical) span residues 6 to 26 and 28 to 48; these read LVFL…IAGA and AGIA…SLLV.

This sequence belongs to the UPF0391 family.

It is found in the cell membrane. In Shewanella baltica (strain OS155 / ATCC BAA-1091), this protein is UPF0391 membrane protein Sbal_1421.